We begin with the raw amino-acid sequence, 1657 residues long: Androglobin (1657 aa).

Residues 1–11 are compositionally biased toward basic residues; the sequence is MASKQAKRKEV. 2 disordered regions span residues 1-40 and 321-398; these read MASK…SFEQ and TKEN…SSDV. A Calpain catalytic domain is found at 70–402; the sequence is KDKTAKSPIF…RPSSDVQYSM (333 aa). Positions 321–386 are enriched in basic and acidic residues; that stretch reads TKENKDGKDG…DGEKEKEKFK (66 aa). Positions 762-889 constitute a Globin; C-terminal part domain; the sequence is HVCSMTTFVI…EDVSLAEWVD (128 aa). Heme b-binding residues include Gln-791 and His-823. In terms of domain architecture, IQ spans 905–934; sequence EIAAAVKIQSMWKGCYVRLLMKARKPETKE. Residues 935–967 enclose the Globin; N-terminal part domain; the sequence is NVTVADTLQKIWAVLEMNLEQYALSLLRLMFKS. Disordered stretches follow at residues 1184–1226, 1288–1356, 1422–1459, and 1638–1657; these read SKQV…TDTG, KHEE…QEDP, TTDT…ADIK, and IEKK…GKKK. The segment covering 1321–1336 has biased composition (basic and acidic residues); sequence EKSAEKEKLAKEKQAP. Composition is skewed to polar residues over residues 1341-1351 and 1422-1443; these read QQVQMPTAVHS and TTDT…SQTK. The stretch at 1585-1640 forms a coiled coil; it reads DEVLEMYGEMRDSVDEARQKILDIREVYRNKLLEAERLRMEALAAQEAAVKIEIEK.

The protein in the central section; belongs to the globin family. It in the N-terminal section; belongs to the peptidase C2 family. Interacts with septin SEPT10; contributes to in vitro proteolytic cleavage of SEPT10 in a calmodulin-dependent manner. Interacts with CFAP69. Interacts with SPEF2. May interact with calmodulin. As to expression, strongly expressed in testis and lung. Weakly expressed in heart, brain, spleen, kidney and tongue.

It localises to the cell projection. The protein resides in the cilium. It is found in the flagellum. Probable chimeric globin with a bis-histidyl six-coordinate heme-iron atom through which it could bind dioxygen, carbon monoxide and nitric oxide. Required for sperm flagellum formation and maturation of elongating spermatids, thus playing an essential role in male fertility. The sequence is that of Androglobin from Mus musculus (Mouse).